Here is a 207-residue protein sequence, read N- to C-terminus: Gap junction epsilon-1 protein (207 aa).

At 1-22 (MSLNYIKNFYEGCLRPPTVIGQ) the chain is on the cytoplasmic side. Residues 23-43 (FHTLFFGSVRTFFLGVLGFAV) traverse the membrane as a helical segment. Residues 44–74 (YGNEALHFSCDPDKRELNLYCYNQFRPITPQ) are Extracellular-facing. Cystine bridges form between C53–C161 and C64–C147. The chain crosses the membrane as a helical span at residues 75 to 95 (VFWALQLVTVLVPGAVFHLYA). The Cytoplasmic segment spans residues 96–111 (ACKNIDQEEILHRPMS). Residues 112–132 (TVFYIISVLLRIILEVLAFWL) traverse the membrane as a helical segment. Topologically, residues 133–175 (QSHLFGFLVDPIFMCDVTGLGKILNVSKCMVPEHFEKTIFLSA) are extracellular. The helical transmembrane segment at 176–196 (MYTFTIITILLCIAEIFEILF) threads the bilayer. The Cytoplasmic portion of the chain corresponds to 197 to 207 (RRLGYLNQPMT).

This sequence belongs to the connexin family. Beta-type (group I) subfamily. As to quaternary structure, a connexon is composed of a hexamer of connexins.

The protein localises to the cell membrane. Has significant hemichannel activity. However, has only low-efficiency gap junction activity and probably does not function as a gap junction channel in vivo. The sequence is that of Gap junction epsilon-1 protein from Danio rerio (Zebrafish).